Consider the following 469-residue polypeptide: 3-isopropylmalate dehydratase large subunit (469 aa).

3 residues coordinate [4Fe-4S] cluster: C347, C408, and C411.

Belongs to the aconitase/IPM isomerase family. LeuC type 1 subfamily. In terms of assembly, heterodimer of LeuC and LeuD. The cofactor is [4Fe-4S] cluster.

It catalyses the reaction (2R,3S)-3-isopropylmalate = (2S)-2-isopropylmalate. The protein operates within amino-acid biosynthesis; L-leucine biosynthesis; L-leucine from 3-methyl-2-oxobutanoate: step 2/4. Catalyzes the isomerization between 2-isopropylmalate and 3-isopropylmalate, via the formation of 2-isopropylmaleate. The sequence is that of 3-isopropylmalate dehydratase large subunit from Haemophilus influenzae (strain PittEE).